The chain runs to 549 residues: Lipase 3 (549 aa).

Positions 1–15 (MKLALALSLIASVAA) are cleaved as a signal peptide. An intrachain disulfide couples cysteine 75 to cysteine 112. Serine 224 acts as the Acyl-ester intermediate in catalysis. Cysteine 283 and cysteine 292 form a disulfide bridge. N-linked (GlcNAc...) asparagine glycosylation is present at asparagine 329. Glutamate 356 acts as the Charge relay system in catalysis. Asparagine 366 carries N-linked (GlcNAc...) asparagine glycosylation. Histidine 464 (charge relay system) is an active-site residue.

Belongs to the type-B carboxylesterase/lipase family. In terms of assembly, monomer and homodimer.

It catalyses the reaction a triacylglycerol + H2O = a diacylglycerol + a fatty acid + H(+). The polypeptide is Lipase 3 (LIP3) (Diutina rugosa (Yeast)).